The chain runs to 79 residues: MGGLQPWHWVIVIAVFVLLFGAKKLPDAARSLGKSMRIFKSEIKEMQSEGKSDNPPATPITSERVDTNPTAEQPDKRSA.

A helical membrane pass occupies residues 1-21 (MGGLQPWHWVIVIAVFVLLFG). Positions 43-52 (IKEMQSEGKS) are enriched in basic and acidic residues. Positions 43–79 (IKEMQSEGKSDNPPATPITSERVDTNPTAEQPDKRSA) are disordered.

Belongs to the TatA/E family. As to quaternary structure, the Tat system comprises two distinct complexes: a TatABC complex, containing multiple copies of TatA, TatB and TatC subunits, and a separate TatA complex, containing only TatA subunits. Substrates initially bind to the TatABC complex, which probably triggers association of the separate TatA complex to form the active translocon.

It is found in the cell membrane. In terms of biological role, part of the twin-arginine translocation (Tat) system that transports large folded proteins containing a characteristic twin-arginine motif in their signal peptide across membranes. TatA could form the protein-conducting channel of the Tat system. This chain is Sec-independent protein translocase protein TatA, found in Mycobacterium sp. (strain JLS).